We begin with the raw amino-acid sequence, 260 residues long: Ribonuclease 3 (260 aa).

One can recognise an RNase III domain in the interval 16–145; the sequence is VQLLESRLGL…VFGAVFLTSG (130 aa). Glu-58 lines the Mg(2+) pocket. Asp-62 is a catalytic residue. 2 residues coordinate Mg(2+): Asp-131 and Glu-134. Glu-134 is a catalytic residue. The region spanning 172–241 is the DRBM domain; that stretch reads DYKTLLQEMA…AQATLEKLRE (70 aa). A disordered region spans residues 219 to 260; that stretch reads ATGRSKKEAEQSAAQATLEKLREDAACPTSPPPGTPRHDTPA.

The protein belongs to the ribonuclease III family. In terms of assembly, homodimer. It depends on Mg(2+) as a cofactor.

The protein localises to the cytoplasm. It carries out the reaction Endonucleolytic cleavage to 5'-phosphomonoester.. Its function is as follows. Digests double-stranded RNA. Involved in the processing of primary rRNA transcript to yield the immediate precursors to the large and small rRNAs (23S and 16S). Processes some mRNAs, and tRNAs when they are encoded in the rRNA operon. Processes pre-crRNA and tracrRNA of type II CRISPR loci if present in the organism. This is Ribonuclease 3 from Myxococcus xanthus (strain DK1622).